The chain runs to 119 residues: Large ribosomal subunit protein uL14 (119 aa).

Belongs to the universal ribosomal protein uL14 family. In terms of assembly, part of the 50S ribosomal subunit. Forms a cluster with proteins L3 and L19. In the 70S ribosome, L14 and L19 interact and together make contacts with the 16S rRNA in bridges B5 and B8.

In terms of biological role, binds to 23S rRNA. Forms part of two intersubunit bridges in the 70S ribosome. The protein is Large ribosomal subunit protein uL14 of Ehrlichia chaffeensis (strain ATCC CRL-10679 / Arkansas).